The following is a 329-amino-acid chain: GTP 3',8-cyclase (329 aa).

The 227-residue stretch at 8-234 (AFARKFYYLR…QLRQRSDGPA (227 aa)) folds into the Radical SAM core domain. Arg17 serves as a coordination point for GTP. Residues Cys24 and Cys28 each coordinate [4Fe-4S] cluster. Tyr30 contacts S-adenosyl-L-methionine. [4Fe-4S] cluster is bound at residue Cys31. Arg68 contributes to the GTP binding site. Gly72 serves as a coordination point for S-adenosyl-L-methionine. Thr99 is a GTP binding site. Residue Ser123 participates in S-adenosyl-L-methionine binding. Lys160 is a GTP binding site. Met194 serves as a coordination point for S-adenosyl-L-methionine. [4Fe-4S] cluster contacts are provided by Cys257 and Cys260. Residue 262 to 264 (RLR) coordinates GTP. Cys274 lines the [4Fe-4S] cluster pocket.

The protein belongs to the radical SAM superfamily. MoaA family. Monomer and homodimer. The cofactor is [4Fe-4S] cluster.

It catalyses the reaction GTP + AH2 + S-adenosyl-L-methionine = (8S)-3',8-cyclo-7,8-dihydroguanosine 5'-triphosphate + 5'-deoxyadenosine + L-methionine + A + H(+). The protein operates within cofactor biosynthesis; molybdopterin biosynthesis. Its function is as follows. Catalyzes the cyclization of GTP to (8S)-3',8-cyclo-7,8-dihydroguanosine 5'-triphosphate. The sequence is that of GTP 3',8-cyclase from Shigella dysenteriae serotype 1 (strain Sd197).